We begin with the raw amino-acid sequence, 132 residues long: Tyrosine phosphatase-like protein N2 (132 aa).

Positions 1-132 constitute a Tyrosine-protein phosphatase domain; that stretch reads MQGPMKNTVA…DILGRFQRVF (132 aa).

Belongs to the protein-tyrosine phosphatase family.

The sequence is that of Tyrosine phosphatase-like protein N2 (N4) from Microplitis demolitor (Parasitoid wasp).